Consider the following 65-residue polypeptide: MNIIEKNNIDKNHLKKNLLDLLKEQFNIRLQLSSGKLKKTHLVKKNKKDIARIKTVLNKRINHTL.

This sequence belongs to the universal ribosomal protein uL29 family.

This chain is Large ribosomal subunit protein uL29, found in Buchnera aphidicola subsp. Cinara cedri (strain Cc).